The following is an 853-amino-acid chain: Transcription factor CPH2 (853 aa).

Disordered stretches follow at residues 165–209 (EPPI…DKNS) and 296–353 (NMNP…VHHP). Positions 180–194 (TTTVSSTNSITNTTK) are enriched in low complexity. Positions 205 to 274 (KDKNSHNMIE…TKATEYIKHL (70 aa)) constitute a bHLH domain. Residues 301–315 (SLPPPPQQMQAPPQP) are compositionally biased toward pro residues. The span at 330–352 (TPASQYPSPQQQVSPTQQQTVHH) shows a compositional bias: low complexity.

Its subcellular location is the nucleus. In terms of biological role, transcription factor that positively controls filamentous growth, virulence, and invasiveness. Binds directly to the two SRE-1-like elements upstream of TEC1 and thus positively regulates expression of this important hyphal growth regulator. Functions independently of known signaling cascades involving EFG1. Also regulates gene expression during intestinal colonization but is not involved in host cell adhesion. This chain is Transcription factor CPH2 (CPH2), found in Candida albicans (strain SC5314 / ATCC MYA-2876) (Yeast).